Here is a 115-residue protein sequence, read N- to C-terminus: Large ribosomal subunit protein bL19 (115 aa).

This sequence belongs to the bacterial ribosomal protein bL19 family.

Its function is as follows. This protein is located at the 30S-50S ribosomal subunit interface and may play a role in the structure and function of the aminoacyl-tRNA binding site. This chain is Large ribosomal subunit protein bL19, found in Bacillus velezensis (strain DSM 23117 / BGSC 10A6 / LMG 26770 / FZB42) (Bacillus amyloliquefaciens subsp. plantarum).